The following is a 370-amino-acid chain: Pantothenate kinase 3 (370 aa).

The active-site Proton acceptor is the Glu138. Ser192, Ser195, and Arg207 together coordinate acetyl-CoA.

Belongs to the type II pantothenate kinase family. As to quaternary structure, homodimer. Highly expressed in the liver.

It localises to the cytoplasm. It catalyses the reaction (R)-pantothenate + ATP = (R)-4'-phosphopantothenate + ADP + H(+). Its pathway is cofactor biosynthesis; coenzyme A biosynthesis; CoA from (R)-pantothenate: step 1/5. Its activity is regulated as follows. Subject to allosteric regulation, exists in two distinct conformational states, a catalytically incompetent (or open) conformation stabilized by the binding of acetyl(acyl)-CoA, and a catalytically competent (or closed) conformation stabilized by ATP-binding. Acetyl-CoA and its thioesters act as allosteric inhibitors and compete with the ATP-binding site. Strongly inhibited by acetyl-CoA, malonyl-CoA and palmitoyl CoA and modestly inhibited by CoA. Inhibited by calcium hopantenate. Catalyzes the phosphorylation of pantothenate to generate 4'-phosphopantothenate in the first and rate-determining step of coenzyme A (CoA) synthesis. The polypeptide is Pantothenate kinase 3 (Pank3) (Mus musculus (Mouse)).